A 426-amino-acid polypeptide reads, in one-letter code: Glucose-6-phosphate isomerase (426 aa).

Glu276 functions as the Proton donor in the catalytic mechanism. Residues His297 and Lys413 contribute to the active site.

Belongs to the GPI family.

The protein localises to the cytoplasm. It catalyses the reaction alpha-D-glucose 6-phosphate = beta-D-fructose 6-phosphate. It participates in carbohydrate biosynthesis; gluconeogenesis. Its pathway is carbohydrate degradation; glycolysis; D-glyceraldehyde 3-phosphate and glycerone phosphate from D-glucose: step 2/4. Functionally, catalyzes the reversible isomerization of glucose-6-phosphate to fructose-6-phosphate. This chain is Glucose-6-phosphate isomerase, found in Mesoplasma florum (strain ATCC 33453 / NBRC 100688 / NCTC 11704 / L1) (Acholeplasma florum).